Reading from the N-terminus, the 250-residue chain is FAS1 domain-containing protein AER383W (250 aa).

An N-terminal signal peptide occupies residues 1-18; sequence MRLKTILLGFCAFHVARS. Residues 87–247 enclose the FAS1 domain; sequence GVTLDDRLQS…GIVLVIDSSL (161 aa).

It localises to the vacuole. This Eremothecium gossypii (strain ATCC 10895 / CBS 109.51 / FGSC 9923 / NRRL Y-1056) (Yeast) protein is FAS1 domain-containing protein AER383W.